The chain runs to 311 residues: Methionyl-tRNA formyltransferase (311 aa).

Position 110 to 113 (110 to 113 (SLLP)) interacts with (6S)-5,6,7,8-tetrahydrofolate.

Belongs to the Fmt family.

It catalyses the reaction L-methionyl-tRNA(fMet) + (6R)-10-formyltetrahydrofolate = N-formyl-L-methionyl-tRNA(fMet) + (6S)-5,6,7,8-tetrahydrofolate + H(+). In terms of biological role, attaches a formyl group to the free amino group of methionyl-tRNA(fMet). The formyl group appears to play a dual role in the initiator identity of N-formylmethionyl-tRNA by promoting its recognition by IF2 and preventing the misappropriation of this tRNA by the elongation apparatus. The sequence is that of Methionyl-tRNA formyltransferase from Streptococcus thermophilus (strain ATCC BAA-250 / LMG 18311).